The primary structure comprises 449 residues: MELETHLSKYFTLAFTHKSMSLEMREKLAINSSATLKEFLQTIKNHCPNIKECMVLSTCNRFEIYASLRHGAHANEQKSALLKILAQNKKMSVSDLEKCVLMNTDESAVHHVFSVCSSLDSLVVGETQITGQMKNAYKFAFEEKFCSKDLTRLLHFAFKCAAKVRNLTGISKQGVSISSVAVKEALNIFEKERIKDKKALVIGLGEMAQLVIKHLLNKQFEALILGRNAAKFEDFIKELEEPKKVSFQNIENLNAYINEYELLFCATSSPHFIVQNSMLKETIFRRFWFDLAVPRNIEKPVLDNIFLYSVDDLEPMVKENVGNRQESRTKAYEIVGLATMEFYQWIQSLEVEPLIKDLRELARISAQKELQKALKKRYVPKEYESNIEKILHNAFNTFLHHPTIALKKNAQKEESDVLVGAIKNLFNLDKSNANHAQNLNLYKCEYYEE.

Residues 58–61, serine 121, 126–128, and glutamine 132 each bind substrate; these read TCNR and ETQ. Residue cysteine 59 is the Nucleophile of the active site. Position 203-208 (203-208) interacts with NADP(+); sequence GLGEMA.

The protein belongs to the glutamyl-tRNA reductase family. In terms of assembly, homodimer.

It carries out the reaction (S)-4-amino-5-oxopentanoate + tRNA(Glu) + NADP(+) = L-glutamyl-tRNA(Glu) + NADPH + H(+). It participates in porphyrin-containing compound metabolism; protoporphyrin-IX biosynthesis; 5-aminolevulinate from L-glutamyl-tRNA(Glu): step 1/2. Functionally, catalyzes the NADPH-dependent reduction of glutamyl-tRNA(Glu) to glutamate 1-semialdehyde (GSA). This is Glutamyl-tRNA reductase from Helicobacter pylori (strain HPAG1).